Consider the following 111-residue polypeptide: MSFSECPLVISACKKFLQKRITIENEALINALITALAQTTTLNDLCLLPIQTYLLSYKNAFEWIHFVCIAITTILDSKYNWKDCTVDINYIFLHVTYIYNIKTKEYLDYCS.

Belongs to the asfivirus E111R family.

This is an uncharacterized protein from Ornithodoros (relapsing fever ticks).